A 501-amino-acid polypeptide reads, in one-letter code: Glutamate--tRNA ligase (501 aa).

A 'HIGH' region motif is present at residues 11 to 21; sequence PSPTGALHIGG. A 'KMSKS' region motif is present at residues 260-264; it reads KLSKR. ATP is bound at residue lysine 263.

This sequence belongs to the class-I aminoacyl-tRNA synthetase family. Glutamate--tRNA ligase type 1 subfamily. Monomer.

It localises to the cytoplasm. The catalysed reaction is tRNA(Glu) + L-glutamate + ATP = L-glutamyl-tRNA(Glu) + AMP + diphosphate. Functionally, catalyzes the attachment of glutamate to tRNA(Glu) in a two-step reaction: glutamate is first activated by ATP to form Glu-AMP and then transferred to the acceptor end of tRNA(Glu). In Flavobacterium psychrophilum (strain ATCC 49511 / DSM 21280 / CIP 103535 / JIP02/86), this protein is Glutamate--tRNA ligase.